Consider the following 535-residue polypeptide: T-complex protein 1 subunit beta (535 aa).

Met1 bears the N-acetylmethionine mark. Ala2 is modified (N-acetylalanine). The residue at position 3 (Ser3) is a Phosphoserine. Lys13 bears the N6-acetyllysine mark. Gly44 contributes to the ADP binding site. Gly44 provides a ligand contact to ATP. Phosphoserine is present on Ser60. Mg(2+) is bound at residue Asp97. Residues Gly98, Thr99, Thr100, and Ser101 each coordinate ADP. Gly98, Thr99, and Thr100 together coordinate ATP. Lys154 is subject to N6-acetyllysine. ADP contacts are provided by Ser168 and Ser169. Lys181 is modified (N6-acetyllysine). A Glycyl lysine isopeptide (Lys-Gly) (interchain with G-Cter in SUMO2) cross-link involves residue Lys248. Ser260 is modified (phosphoserine). Phosphothreonine is present on Thr261. ADP contacts are provided by Gly410, Glu495, and Lys500. 2 residues coordinate ATP: Glu495 and Lys500.

Belongs to the TCP-1 chaperonin family. As to quaternary structure, component of the chaperonin-containing T-complex (TRiC), a hexadecamer composed of two identical back-to-back stacked rings enclosing a protein folding chamber. Each ring is made up of eight different subunits: TCP1/CCT1, CCT2, CCT3, CCT4, CCT5, CCT6A/CCT6, CCT7, CCT8. Interacts with PACRG. Interacts with FLCN. Interacts with DLEC1. Interacts with SVEP1.

It is found in the cytoplasm. It catalyses the reaction ATP + H2O = ADP + phosphate + H(+). In terms of biological role, component of the chaperonin-containing T-complex (TRiC), a molecular chaperone complex that assists the folding of actin, tubulin and other proteins upon ATP hydrolysis. The TRiC complex mediates the folding of WRAP53/TCAB1, thereby regulating telomere maintenance. As part of the TRiC complex may play a role in the assembly of BBSome, a complex involved in ciliogenesis regulating transports vesicles to the cilia. This Homo sapiens (Human) protein is T-complex protein 1 subunit beta.